We begin with the raw amino-acid sequence, 359 residues long: 4-galactosyl-N-acetylglucosaminide 3-alpha-L-fucosyltransferase FUT6 (359 aa).

Over 1–14 the chain is Cytoplasmic; sequence MDPLGPAKTQWSWR. A helical; Signal-anchor for type II membrane protein membrane pass occupies residues 15–34; the sequence is CCLTALLFQLLVAVCFFSYL. Residues 35 to 359 are Lumenal-facing; the sequence is RVSRDDPTVY…QTRSIAAWFT (325 aa). The interval 73–112 is determines site-specific fucosylation; sequence KPIALPRCSEMVPGTADCNITADRKVYPQADAVIVHHREV. N-linked (GlcNAc...) asparagine glycans are attached at residues asparagine 91, asparagine 153, and asparagine 184.

It belongs to the glycosyltransferase 10 family. In terms of assembly, homodimer and monomer. Monomer (secreted form). In terms of processing, N-glycosylated. Proteolytic cleavage releases a secreted glycoform of 43 kDa.

It localises to the golgi apparatus. Its subcellular location is the golgi stack membrane. It is found in the secreted. It catalyses the reaction a beta-D-galactosyl-(1-&gt;4)-N-acetyl-beta-D-glucosaminyl derivative + GDP-beta-L-fucose = a beta-D-galactosyl-(1-&gt;4)-[alpha-L-fucosyl-(1-&gt;3)]-N-acetyl-beta-D-glucosaminyl derivative + GDP + H(+). It carries out the reaction an N-acetyl-alpha-neuraminyl-(2-&gt;3)-beta-D-galactosyl-(1-&gt;4)-N-acetyl-beta-D-glucosaminyl derivative + GDP-beta-L-fucose = an alpha-Neu5Ac-(2-&gt;3)-beta-D-Gal-(1-&gt;4)-[alpha-L-Fuc-(1-&gt;3)]-beta-D-GlcNAc derivative + GDP + H(+). The catalysed reaction is an alpha-Neu5Ac-(2-&gt;3)-beta-D-Gal-(1-&gt;4)-beta-D-GlcNAc-(1-&gt;3)-beta-D-Gal-(1-&gt;4)-[alpha-L-Fuc-(1-&gt;3)]-beta-D-GlcNAc derivative + GDP-beta-L-fucose = an alpha-Neu5Ac-(2-&gt;3)-beta-D-Gal-(1-&gt;4)-[alpha-L-Fuc-(1-&gt;3)]-beta-D-GlcNAc-(1-&gt;3)-beta-D-Gal-(1-&gt;4)-[alpha-L-Fuc-(1-&gt;3)]-beta-D-GlcNAc derivative + GDP + H(+). The enzyme catalyses a neolactoside nLc6Cer + GDP-beta-L-fucose = beta-D-Gal-(1-&gt;4)-[alpha-L-Fuc-(1-&gt;3)]-beta-D-GlcNAc-(1-&gt;3)-beta-D-Gal-(1-&gt;4)-beta-D-GlcNAc-(1-&gt;3)-beta-D-Gal-(1-&gt;4)-beta-D-Glc-(1&lt;-&gt;1')-Cer + GDP + H(+). It catalyses the reaction a neolactoside nLc6Cer + GDP-beta-L-fucose = beta-D-galactosyl-(1-&gt;4)-N-acetyl-beta-D-glucosaminyl-(1-&gt;3)-beta-D-galactosyl-(1-&gt;4)-[alpha-L-fucosyl-(1-&gt;3)]-N-acetyl-beta-D-glucosaminyl-(1-&gt;3)-beta-D-galactosyl-(1-&gt;4)-beta-D-glucosyl-(1&lt;-&gt;1')-ceramide + GDP + H(+). It carries out the reaction a neolactoside VI(3)-alpha-NeuNAc-nLc6Cer + GDP-beta-L-fucose = a neolactoside VI(3)-alpha-NeuAc,V(3)-alphaFuc-nLc6Cer + GDP + H(+). The catalysed reaction is beta-D-galactosyl-(1-&gt;4)-N-acetyl-D-glucosamine + GDP-beta-L-fucose = beta-D-galactosyl-(1-&gt;4)-[alpha-L-fucosyl-(1-&gt;3)]-N-acetyl-D-glucosamine + GDP + H(+). The enzyme catalyses N-acetyl-alpha-neuraminosyl-(2-&gt;3)-beta-D-galactosyl-(1-&gt;4)-N-acetyl-beta-D-glucosamine + GDP-beta-L-fucose = N-acetyl-alpha-neuraminosyl-(2-&gt;3)-beta-D-galactosyl-(1-&gt;4)-[alpha-L-fucosyl-(1-&gt;3)]-N-acetyl-beta-D-glucosamine + GDP + H(+). It catalyses the reaction lactose + GDP-beta-L-fucose = beta-D-galactosyl-(1-&gt;4)-[alpha-L-fucosyl-(1-&gt;3)]-D-glucose + GDP + H(+). It carries out the reaction alpha-L-Fuc-(1-&gt;2)-beta-D-Gal-(1-&gt;4)-D-Glc + GDP-beta-L-fucose = alpha-L-Fuc-(1-&gt;2)-beta-D-Gal-(1-&gt;4)-[alpha-L-Fuc-(1-&gt;3)]-D-Glc + GDP + H(+). The catalysed reaction is a beta-D-galactosyl-(1-&gt;4)-N-acetyl-beta-D-6-sulfooxy-glucosaminyl derivative + GDP-beta-L-fucose = a beta-D-galactosyl-(1-&gt;4)-[alpha-L-fucosyl-(1-&gt;3)]-N-acetyl-beta-D-6-sulfooxy-glucosaminyl derivative + GDP + H(+). It functions in the pathway protein modification; protein glycosylation. Catalyzes the transfer of L-fucose, from a guanosine diphosphate-beta-L-fucose, to the N-acetyl glucosamine (GlcNAc) of a distal alpha2,3 sialylated lactosamine unit of a glycoprotein- or glycolipid-linked sialopolylactosamines chain or of a distal or internal lactosamine unit of a neutral glycoprotein- or glycolipid-linked polylactosamines chain through an alpha-1,3 glycosidic linkage and participates in surface expression of the sialyl Lewis X (sLe(x)), Lewis X (Le(x)) and non sialylated VIM2 determinants. Moreover transfers fucose to H-type 2 (Fucalpha1-2Galbeta1-4GlcNAc) chain acceptor substrates and participates in difucosylated sialyl Lewis x determinants. Also fucosylates a polylactosamine substrate having a 6 sulfate modification at the GlcNAc moiety and gives rise to sialyl and non-sialyl 6-sulfo lewis X. Does not have activity towards type 1 ((Galbeta1-3GlcNAc)) and H-type 1 chain (Fucalpha1-2Galbeta1-3GlcNAc) acceptors substrates. The polypeptide is 4-galactosyl-N-acetylglucosaminide 3-alpha-L-fucosyltransferase FUT6 (Pongo pygmaeus (Bornean orangutan)).